Consider the following 644-residue polypeptide: Type III restriction-modification enzyme EcoP15I Mod subunit (644 aa).

Positions 123 to 126 (DPPY) are binding of S-adenosyl methionine.

Belongs to the N(4)/N(6)-methyltransferase family. Forms a homodimer capable of methylating the target sequence in the absence of Res. A heterotetramer with stoichiometry Res(2)Mod(2). A heterotrimer with stoichiometry Res(1)Mod(2).

It carries out the reaction a 2'-deoxyadenosine in DNA + S-adenosyl-L-methionine = an N(6)-methyl-2'-deoxyadenosine in DNA + S-adenosyl-L-homocysteine + H(+). In terms of biological role, a beta subtype methylase that binds the system-specific DNA recognition site 5'-CAGCAG-3' and methylates A-5 (of only 1 strand as the other does not have an A residue). DNA restriction requires both the Res and Mod subunits. The A-5 nucleotide flips into the catalytic pocket of one Mod subunit for modification, while the other Mod subunit makes most of the DNA sequence-specific contacts. This is Type III restriction-modification enzyme EcoP15I Mod subunit from Escherichia coli.